The chain runs to 834 residues: Phenylalanine--tRNA ligase beta subunit (834 aa).

Residues 48–159 (GDIERPLVVG…GTAEPGTDAN (112 aa)) form the tRNA-binding domain. The B5 domain maps to 411-492 (PAPEPIRMDI…RLEGLEQIPS (82 aa)). Mg(2+) is bound by residues Asp470, Asp476, Glu479, and Glu480. Positions 740-833 (SPFPAVLQDV…AADAVGAVLR (94 aa)) constitute an FDX-ACB domain.

This sequence belongs to the phenylalanyl-tRNA synthetase beta subunit family. Type 1 subfamily. In terms of assembly, tetramer of two alpha and two beta subunits. The cofactor is Mg(2+).

It is found in the cytoplasm. The enzyme catalyses tRNA(Phe) + L-phenylalanine + ATP = L-phenylalanyl-tRNA(Phe) + AMP + diphosphate + H(+). The chain is Phenylalanine--tRNA ligase beta subunit from Nocardia farcinica (strain IFM 10152).